Here is a 526-residue protein sequence, read N- to C-terminus: pH-sensitive chloride channel 2 (526 aa).

Residues 1-18 form the signal peptide; sequence MDTLGIFVLISYLGLSSA. At 19–300 the chain is on the extracellular side; it reads AGVHLGDLQQ…VLLTREVGYY (282 aa). N-linked (GlcNAc...) asparagine glycosylation is found at N33, N42, N52, N192, N231, N264, N271, and N283. The helical transmembrane segment at 301 to 321 threads the bilayer; it reads VIDYFLPSIMIVTISWVSFWL. Topologically, residues 322 to 327 are cytoplasmic; that stretch reads QADQTP. The helical transmembrane segment at 328–347 threads the bilayer; sequence ARTTLGCTTLLSFITLSLSQ. Residues 348 to 360 are Extracellular-facing; it reads ENNLMKVSYVTMS. The helical transmembrane segment at 361 to 381 threads the bilayer; the sequence is EVWFLVCTIFIFGSLVEFAFV. Topologically, residues 382 to 505 are cytoplasmic; the sequence is NTIWRRNNDL…VSLWIDRKMR (124 aa). Residues 463 to 488 form a disordered region; it reads ISLDEQDETSTSESSDSSKEKPAQTF. The helical transmembrane segment at 506 to 526 threads the bilayer; it reads FVFPLSFIVFNALFWTLVYCL.

It belongs to the ligand-gated ion channel (TC 1.A.9) family. In terms of tissue distribution, in third-instar larvae, expressed in the principal cells of the excretory Malpighian tubules (at protein level). Also detected in the enterocytes of the copper cell region and the iron cell region of the larval midgut (at protein level). In the copper cell region expression is confined to the interstitial cells and in the iron cell region it is expressed in the anterior portion (at protein level). Expressed in the Malpighian tubules and the middle midgut of third instar larvae and adults.

Its subcellular location is the apical cell membrane. The protein resides in the cell projection. The protein localises to the microvillus membrane. It localises to the late endosome membrane. It is found in the lysosome membrane. It catalyses the reaction chloride(in) = chloride(out). Ligand and pH-gated channel that mediates chloride transport primarily in the mid-gut and thereby functions in larval metabolism and fluid homeostasis. Channel opening is triggered by zinc binding or, to a lesser extent, an increase in extracellular pH. Zinc-dependent activity in the mid-gut is required for modulating Tor-dependent metabolic programs that promote larval feeding and systematic growth. It may therefore act as an intestinal zinc sensor that mediates larval growth and metabolism in response to micronutrient availability. Activates Tor signaling via its activity in maintaining lysosome homeostasis in interstitial cells and/or by its role in activating the release of insulin-like peptides in the brain after feeding, via an unknown mechanism. Functions in lysosome homeostasis by regulating chloride transport into enterocyte lysosomes to sustain V-ATPase function which maintains lysosomal acidification and consequently promotes Tor activation at the lysosome membrane. Also appears to play a role in regulating fluid secretion and osmotic homeostasis in Malpighian tubules in response to the pH of extracellular urine. This function is important for proper urine production during diuresis. This is pH-sensitive chloride channel 2 from Drosophila melanogaster (Fruit fly).